The following is a 295-amino-acid chain: Aquaporin NIP2-1 (295 aa).

2 helical membrane passes run 49–69 (VVSE…AAGI) and 83–103 (SVAG…ISGA). Residues 106–108 (NPA) carry the NPA 1 motif. 3 consecutive transmembrane segments (helical) span residues 124 to 146 (VPFY…KAVL), 164 to 184 (SLVI…AVAT), and 192 to 212 (LAGL…GAVS). The NPA 2 signature appears at 217–219 (NPA). Residues 230-250 (LYTGLWIYFLGPVLGTLSGAW) traverse the membrane as a helical segment.

Belongs to the MIP/aquaporin (TC 1.A.8) family. NIP (TC 1.A.8.12) subfamily.

Its subcellular location is the membrane. Aquaporins facilitate the transport of water and small neutral solutes across cell membranes. In Zea mays (Maize), this protein is Aquaporin NIP2-1 (NIP2-1).